A 62-amino-acid chain; its full sequence is Photosystem II reaction center protein Z (62 aa).

2 consecutive transmembrane segments (helical) span residues 8–28 (AVFA…VVFA) and 41–61 (FSGT…NSLI).

The protein belongs to the PsbZ family. PSII is composed of 1 copy each of membrane proteins PsbA, PsbB, PsbC, PsbD, PsbE, PsbF, PsbH, PsbI, PsbJ, PsbK, PsbL, PsbM, PsbT, PsbY, PsbZ, Psb30/Ycf12, at least 3 peripheral proteins of the oxygen-evolving complex and a large number of cofactors. It forms dimeric complexes.

The protein resides in the plastid. Its subcellular location is the chloroplast thylakoid membrane. Its function is as follows. May control the interaction of photosystem II (PSII) cores with the light-harvesting antenna, regulates electron flow through the 2 photosystem reaction centers. PSII is a light-driven water plastoquinone oxidoreductase, using light energy to abstract electrons from H(2)O, generating a proton gradient subsequently used for ATP formation. The polypeptide is Photosystem II reaction center protein Z (Phalaenopsis aphrodite subsp. formosana (Moth orchid)).